Reading from the N-terminus, the 385-residue chain is Torsin-3A (385 aa).

Residues 1–21 form the signal peptide; the sequence is MFLGALWLLLLLPLRPPGAQG. Asparagine 110 carries N-linked (GlcNAc...) asparagine glycosylation. Position 155–162 (155–162) interacts with ATP; sequence GWSGTGKN.

Belongs to the ClpA/ClpB family. Torsin subfamily. Interacts with TOR1AIP1. In terms of processing, N-glycosylated.

Its subcellular location is the cytoplasm. It is found in the endoplasmic reticulum lumen. The chain is Torsin-3A (Tor3a) from Mus musculus (Mouse).